Consider the following 157-residue polypeptide: MFDILMYLFENYVHSEVEFLVDEDELTKELTRAGFHQAEIIKALTWLEGLAELQEAGTPYLCNHDQQSFRIYTKDELERIDVESRGFLLFLEQIKVLSVETREMVIDRVMQLDESSLNLDDLKWVILMVLFNAPGHESAYEQMEDLIFEQPDGRLHS.

This sequence belongs to the Smg family.

This is Protein Smg homolog from Shewanella piezotolerans (strain WP3 / JCM 13877).